Reading from the N-terminus, the 1412-residue chain is DNA-directed RNA polymerase subunit beta' (1412 aa).

Mg(2+)-binding residues include D543, D545, and D547. The Zn(2+) site is built by C1017, C1092, C1099, and C1102.

It belongs to the RNA polymerase beta' chain family. In terms of assembly, the RNAP catalytic core consists of 2 alpha, 1 beta, 1 beta' and 1 omega subunit. When a sigma factor is associated with the core the holoenzyme is formed, which can initiate transcription. Requires Mg(2+) as cofactor. Zn(2+) is required as a cofactor.

The enzyme catalyses RNA(n) + a ribonucleoside 5'-triphosphate = RNA(n+1) + diphosphate. In terms of biological role, DNA-dependent RNA polymerase catalyzes the transcription of DNA into RNA using the four ribonucleoside triphosphates as substrates. The polypeptide is DNA-directed RNA polymerase subunit beta' (Mesomycoplasma hyopneumoniae (strain J / ATCC 25934 / NCTC 10110) (Mycoplasma hyopneumoniae)).